The chain runs to 38 residues: Large ribosomal subunit protein bL36 (38 aa).

The protein belongs to the bacterial ribosomal protein bL36 family.

In Pseudoalteromonas atlantica (strain T6c / ATCC BAA-1087), this protein is Large ribosomal subunit protein bL36.